The following is a 458-amino-acid chain: Tetratricopeptide repeat protein 23-like (458 aa).

2 coiled-coil regions span residues 175 to 198 (GKQAYIHLQKAERNMKELKELNNG) and 246 to 278 (TSELISLYEEIAQIEQLRKNHKQAIQYLQQAYS).

The protein localises to the cytoplasm. It is found in the cytoskeleton. The protein resides in the microtubule organizing center. It localises to the centrosome. Its subcellular location is the spindle. The protein localises to the midbody. The sequence is that of Tetratricopeptide repeat protein 23-like (Ttc23l) from Mus musculus (Mouse).